A 340-amino-acid polypeptide reads, in one-letter code: Sterol-4-alpha-carboxylate 3-dehydrogenase erg26, decarboxylating (340 aa).

Tyr-144 acts as the Proton acceptor in catalysis. Lys-148 is a binding site for NAD(+).

It belongs to the 3-beta-HSD family. In terms of assembly, heterotetramer of erg25, erg26, erg27 and erg28. Erg28 acts as a scaffold to tether erg27 and other 4,4-demethylation-related enzymes, forming a demethylation enzyme complex, in the endoplasmic reticulum.

It is found in the endoplasmic reticulum membrane. The enzyme catalyses 4beta-methylzymosterol-4alpha-carboxylate + NADP(+) = 3-dehydro-4-methylzymosterol + CO2 + NADPH. Its pathway is steroid biosynthesis; zymosterol biosynthesis; zymosterol from lanosterol: step 4/6. The protein operates within steroid metabolism; ergosterol biosynthesis. Functionally, sterol-4-alpha-carboxylate 3-dehydrogenase; part of the third module of ergosterol biosynthesis pathway that includes by the late steps of the pathway. Erg26 is a catalytic component of the C-4 demethylation complex that catalyzes the oxidative decarboxylation that results in a reduction of the 3-beta-hydroxy group at the C-3 carbon to an oxo group. The third module or late pathway involves the ergosterol synthesis itself through consecutive reactions that mainly occur in the endoplasmic reticulum (ER) membrane. Firstly, the squalene synthase erg9 catalyzes the condensation of 2 farnesyl pyrophosphate moieties to form squalene, which is the precursor of all steroids. Secondly, squalene is converted into lanosterol by the consecutive action of the squalene epoxidase erg1 and the lanosterol synthase erg7. The lanosterol 14-alpha-demethylase erg11/cyp1 catalyzes C14-demethylation of lanosterol to produce 4,4'-dimethyl cholesta-8,14,24-triene-3-beta-ol. In the next steps, a complex process involving various demethylation, reduction and desaturation reactions catalyzed by the C-14 reductase erg24 and the C-4 demethylation complex erg25-erg26-erg27 leads to the production of zymosterol. Erg28 likely functions in the C-4 demethylation complex reaction by tethering erg26 and Erg27 to the endoplasmic reticulum or to facilitate interaction between these proteins. Then, the sterol 24-C-methyltransferase erg6 catalyzes the methyl transfer from S-adenosyl-methionine to the C-24 of zymosterol to form fecosterol. The C-8 sterol isomerase erg2 catalyzes the reaction which results in unsaturation at C-7 in the B ring of sterols and thus converts fecosterol to episterol. The sterol-C5-desaturases erg31 and erg32 then catalyze the introduction of a C-5 double bond in the B ring to produce 5-dehydroepisterol. The C-22 sterol desaturase erg5 further converts 5-dehydroepisterol into ergosta-5,7,22,24(28)-tetraen-3beta-ol by forming the C-22(23) double bond in the sterol side chain. Finally, ergosta-5,7,22,24(28)-tetraen-3beta-ol is substrate of the C-24(28) sterol reductase erg4 to produce ergosterol. In the genus Schizosaccharomyces, a second route exists between lanosterol and fecosterol, via the methylation of lanosterol to eburicol by erg6, followed by C14-demethylation by erg11/cyp1 and C4-demethylation by the demethylation complex erg25-erg26-erg27. This Schizosaccharomyces pombe (strain 972 / ATCC 24843) (Fission yeast) protein is Sterol-4-alpha-carboxylate 3-dehydrogenase erg26, decarboxylating.